The following is a 156-amino-acid chain: Small ribosomal subunit protein uS7 (156 aa).

Belongs to the universal ribosomal protein uS7 family. Part of the 30S ribosomal subunit. Contacts proteins S9 and S11.

Functionally, one of the primary rRNA binding proteins, it binds directly to 16S rRNA where it nucleates assembly of the head domain of the 30S subunit. Is located at the subunit interface close to the decoding center, probably blocks exit of the E-site tRNA. The polypeptide is Small ribosomal subunit protein uS7 (Streptococcus sanguinis (strain SK36)).